Reading from the N-terminus, the 313-residue chain is Putative serine protease 29 (313 aa).

Pro residues predominate over residues 1–22 (MPTTPDPGSEPPARTPRPPPLT). A disordered region spans residues 1–27 (MPTTPDPGSEPPARTPRPPPLTPGLSP). Positions 68–310 (IVGGHNAPPG…YVPWILQQVG (243 aa)) constitute a Peptidase S1 domain. A disulfide bridge links C99 with C115. H114 acts as the Charge relay system in catalysis. An N-linked (GlcNAc...) asparagine glycan is attached at N143. Residue D161 is the Charge relay system of the active site. Disulfide bonds link C193–C268, C226–C249, and C258–C286. The Charge relay system role is filled by S262.

The protein belongs to the peptidase S1 family.

The protein resides in the secreted. The protein is Putative serine protease 29 (PRSS29P) of Homo sapiens (Human).